Consider the following 111-residue polypeptide: Iron-sulfur cluster assembly protein CyaY (111 aa).

It belongs to the frataxin family.

Functionally, involved in iron-sulfur (Fe-S) cluster assembly. May act as a regulator of Fe-S biogenesis. The chain is Iron-sulfur cluster assembly protein CyaY from Cupriavidus metallidurans (strain ATCC 43123 / DSM 2839 / NBRC 102507 / CH34) (Ralstonia metallidurans).